The primary structure comprises 229 residues: Large ribosomal subunit protein uL1 (229 aa).

Belongs to the universal ribosomal protein uL1 family. As to quaternary structure, part of the 50S ribosomal subunit.

In terms of biological role, binds directly to 23S rRNA. The L1 stalk is quite mobile in the ribosome, and is involved in E site tRNA release. Protein L1 is also a translational repressor protein, it controls the translation of the L11 operon by binding to its mRNA. The protein is Large ribosomal subunit protein uL1 of Phenylobacterium zucineum (strain HLK1).